The primary structure comprises 717 residues: HHIP-like protein 2 (717 aa).

The first 40 residues, 1-40, serve as a signal peptide directing secretion; the sequence is MLGKHTSPHTVPGHRAPWLSPGIFCLGLPFLLGWVGLLQG. 4 disulfides stabilise this stretch: Cys203/Cys545, Cys207/Cys551, Cys423/Cys441, and Cys508/Cys607. A disordered region spans residues 642–717; it reads ARKASNATFT…MRQAAGRSHP (76 aa). The segment covering 646–662 has biased composition (polar residues); that stretch reads SNATFTSSSDRVASQKG. Asn647 carries an N-linked (GlcNAc...) asparagine glycan. The span at 672–687 shows a compositional bias: basic residues; that stretch reads SSKKTFRRPGTKKKSR.

The protein belongs to the HHIP family.

Its subcellular location is the secreted. This Mus musculus (Mouse) protein is HHIP-like protein 2 (Hhipl2).